The primary structure comprises 172 residues: Large ribosomal subunit protein uL10 (172 aa).

This sequence belongs to the universal ribosomal protein uL10 family. In terms of assembly, part of the ribosomal stalk of the 50S ribosomal subunit. The N-terminus interacts with L11 and the large rRNA to form the base of the stalk. The C-terminus forms an elongated spine to which L12 dimers bind in a sequential fashion forming a multimeric L10(L12)X complex.

In terms of biological role, forms part of the ribosomal stalk, playing a central role in the interaction of the ribosome with GTP-bound translation factors. This Chlorobium limicola (strain DSM 245 / NBRC 103803 / 6330) protein is Large ribosomal subunit protein uL10.